The following is a 530-amino-acid chain: Putative ABC transporter ATP-binding protein SSO2030 (530 aa).

2 consecutive ABC transporter domains span residues 6–243 (IRDL…LGLE) and 282–516 (ALYA…EPPL). ATP is bound by residues 38–45 (GRSGSGKS) and 314–321 (GKNGSGKT).

The protein belongs to the ABC transporter superfamily.

The protein localises to the cell membrane. Its function is as follows. Probably part of an ABC transporter complex. Responsible for energy coupling to the transport system. The polypeptide is Putative ABC transporter ATP-binding protein SSO2030 (Saccharolobus solfataricus (strain ATCC 35092 / DSM 1617 / JCM 11322 / P2) (Sulfolobus solfataricus)).